Reading from the N-terminus, the 349-residue chain is Small ribosomal subunit biogenesis GTPase RsgA (349 aa).

Basic residues predominate over residues 1-11; the sequence is MSKKKLSKGQQ. Positions 1–29 are disordered; that stretch reads MSKKKLSKGQQRRVSANHQRRLKKTESKV. The CP-type G domain occupies 102 to 272; it reads HSVLTRPDYY…VIDSPGVREF (171 aa). Residues 158–161 and 212–220 contribute to the GTP site; these read NKID and GQSGVGKSS. Zn(2+)-binding residues include cysteine 296, cysteine 301, histidine 303, and cysteine 309.

The protein belongs to the TRAFAC class YlqF/YawG GTPase family. RsgA subfamily. Monomer. Associates with 30S ribosomal subunit, binds 16S rRNA. Zn(2+) is required as a cofactor.

It localises to the cytoplasm. Functionally, one of several proteins that assist in the late maturation steps of the functional core of the 30S ribosomal subunit. Helps release RbfA from mature subunits. May play a role in the assembly of ribosomal proteins into the subunit. Circularly permuted GTPase that catalyzes slow GTP hydrolysis, GTPase activity is stimulated by the 30S ribosomal subunit. This chain is Small ribosomal subunit biogenesis GTPase RsgA, found in Pectobacterium atrosepticum (strain SCRI 1043 / ATCC BAA-672) (Erwinia carotovora subsp. atroseptica).